A 1942-amino-acid chain; its full sequence is Myosin-2 (1942 aa).

Positions 33 to 82 (DAKTSVFVAEPKESFVKGTIQSKDAGKVTVKTEAGATLTVKEDQIFPMNP) constitute a Myosin N-terminal SH3-like domain. T64 and T69 each carry phosphothreonine. The 700-residue stretch at 86 to 785 (DKIEDMAMMT…LLGLLEEMRD (700 aa)) folds into the Myosin motor domain. Residue 179–186 (GESGAGKT) coordinates ATP. A Phosphotyrosine modification is found at Y389. T419 carries the phosphothreonine modification. A Phosphoserine modification is found at S625. An actin-binding region spans residues 662–684 (LNKLMTNLRSTHPHFVRCIIPNE). Pros-methylhistidine is present on H760. In terms of domain architecture, IQ spans 788 to 817 (LAQLITRTQAMCRGFLARVEYQKMVERRES). A coiled-coil region spans residues 849-1930 (SAETEKEMAT…ESQVNKLRVK (1082 aa)). Phosphoserine occurs at positions 1095 and 1099. Residues 1130–1175 (EAERASRAKAEKQRSDLSRELEEISERLEEAGGATSAQIEMNKKRE) form a disordered region. Residues 1131 to 1159 (AERASRAKAEKQRSDLSRELEEISERLEE) are compositionally biased toward basic and acidic residues. S1165 and S1240 each carry phosphoserine. Residue T1244 is modified to Phosphothreonine. S1246 is subject to Phosphoserine. At T1258 the chain carries Phosphothreonine. S1264 is subject to Phosphoserine. Position 1289 is a phosphothreonine (T1289). Phosphoserine occurs at positions 1291, 1295, 1306, and 1309. Y1467 carries the post-translational modification Phosphotyrosine. T1470 is subject to Phosphothreonine. S1477 is subject to Phosphoserine. Y1495 is subject to Phosphotyrosine. S1498 carries the phosphoserine modification. A Phosphothreonine modification is found at T1504. S1517 carries the phosphoserine modification. T1520 bears the Phosphothreonine mark. Phosphoserine is present on residues S1557, S1577, S1603, S1606, S1717, and S1729. A phosphothreonine mark is found at T1733 and T1739. At S1742 the chain carries Phosphoserine.

Belongs to the TRAFAC class myosin-kinesin ATPase superfamily. Myosin family. In terms of assembly, muscle myosin is a hexameric protein that consists of 2 heavy chain subunits (MHC), 2 alkali light chain subunits (MLC) and 2 regulatory light chain subunits (MLC-2). Interacts with GCSAM. Expressed in type 2a myofibers in the tibialis anterior and soleus muscles (at protein level).

It is found in the cytoplasm. Its subcellular location is the myofibril. In terms of biological role, myosins are actin-based motor molecules with ATPase activity essential for muscle contraction. The polypeptide is Myosin-2 (Mus musculus (Mouse)).